The primary structure comprises 723 residues: Malonamoyl-CoA synthetase vrtB (723 aa).

This sequence belongs to the ATP-dependent AMP-binding enzyme family.

Its pathway is secondary metabolite biosynthesis; terpenoid biosynthesis. Functionally, malonamoyl-CoA synthetase; part of the gene cluster that mediates the biosynthesis of viridicatumtoxin, a tetracycline-like fungal meroterpenoid with a unique, fused spirobicyclic ring system. The first step of the pathway is the production of the malonamoyl-CoA starter unit for the polyketide synthase vrtA. The aldolase vrtJ may be involved in the synthesis of the malonamate substrate for malonamoyl-CoA synthetase vrtB. The polyketide synthase vrtA then may utilize the malonamoyl-CoA starter unit, followed by sequential condensation of eight malonyl-CoA units to form the polyketide backbone. The cyclization of the last ring could be mediated by the lactamase-like protein vrtG. The proposed post-PKS tailoring steps are a hydroxylation at C5 catalyzed the cytochrome P450 monooxygenase vrtE, a hydroxylation at C12a catalyzed by VrtH and/or VrtI, and an O-methylation by the O-methyltransferase vrtF. VrtC is then proposed to catalyze the transfer of a geranyl group synthesized by vrtD to the aromatic C ring of the tetracyclic polyketide intermediate of viridicatumtoxin to yield previridicatumtoxin. Finally, the cytochrome P450 monooxygenase vrtK catalyzes the spirocyclization of the geranyl moiety of previridicatumtoxin to afford viridicatumtoxin. The protein is Malonamoyl-CoA synthetase vrtB of Penicillium aethiopicum.